The following is a 135-amino-acid chain: Small ribosomal subunit protein bS18 (135 aa).

The segment at 1 to 65 (MARPDMGGPK…GDEGGGRRGF (65 aa)) is disordered. Gly residues predominate over residues 9-41 (PKTGGFGGPRSGGFGGGGGGGGGFGGGGFGGGR). A compositionally biased stretch (basic and acidic residues) spans 42 to 61 (GGDRGDRGDRDDRGGDEGGG).

It belongs to the bacterial ribosomal protein bS18 family. In terms of assembly, part of the 30S ribosomal subunit. Forms a tight heterodimer with protein bS6.

Its function is as follows. Binds as a heterodimer with protein bS6 to the central domain of the 16S rRNA, where it helps stabilize the platform of the 30S subunit. In Anaeromyxobacter sp. (strain K), this protein is Small ribosomal subunit protein bS18.